The primary structure comprises 178 residues: Oligoribonuclease (178 aa).

Residues 7-168 form the Exonuclease domain; the sequence is LIWIDLEMTG…DDIRESIAEL (162 aa). Tyr128 is an active-site residue.

Belongs to the oligoribonuclease family.

The protein localises to the cytoplasm. Functionally, 3'-to-5' exoribonuclease specific for small oligoribonucleotides. In Pseudomonas syringae pv. syringae (strain B728a), this protein is Oligoribonuclease.